The chain runs to 371 residues: Cytochrome b (371 aa).

Helical transmembrane passes span 25-45, 69-90, 105-125, and 170-190; these read FGSM…FLAV, WMMQ…YIHI, WMSG…GYVL, and FFAL…LHII. The heme b site is built by histidine 75 and histidine 89. Residues histidine 174 and histidine 188 each coordinate heme b. Histidine 193 contributes to the a ubiquinone binding site. The next 4 membrane-spanning stretches (helical) occupy residues 218–238, 280–300, 312–332, and 339–358; these read YKDL…VSFF, LGGA…PFMH, LSQL…WAAT, and YIMI…LSIP.

The protein belongs to the cytochrome b family. In terms of assembly, the cytochrome bc1 complex contains 3 respiratory subunits (MT-CYB, CYC1 and UQCRFS1), 2 core proteins (UQCRC1 and UQCRC2) and probably 6 low-molecular weight proteins. Requires heme b as cofactor.

Its subcellular location is the mitochondrion inner membrane. Its function is as follows. Component of the ubiquinol-cytochrome c reductase complex (complex III or cytochrome b-c1 complex) that is part of the mitochondrial respiratory chain. The b-c1 complex mediates electron transfer from ubiquinol to cytochrome c. Contributes to the generation of a proton gradient across the mitochondrial membrane that is then used for ATP synthesis. In Simalia amethistina (Amethystine python), this protein is Cytochrome b (MT-CYB).